The primary structure comprises 148 residues: MTKTVYVLNGPNLNLLGTREPQVYGSQTLADVEQLCTAACARHGLALVFRQSNHEGALVDWIHEASRLHAAGQLAGVVLNAAAYTHTSVALLDAVKGTGVPVVELHISNVHARESFRHHSYLAGAARAVMCGFGVQGYALAIDGLAQW.

Tyr-24 (proton acceptor) is an active-site residue. Substrate contacts are provided by Asn-80, His-86, and Asp-93. His-106 functions as the Proton donor in the catalytic mechanism. Substrate is bound by residues 107–108 (IS) and Arg-117.

This sequence belongs to the type-II 3-dehydroquinase family. Homododecamer.

The enzyme catalyses 3-dehydroquinate = 3-dehydroshikimate + H2O. The protein operates within metabolic intermediate biosynthesis; chorismate biosynthesis; chorismate from D-erythrose 4-phosphate and phosphoenolpyruvate: step 3/7. Its function is as follows. Catalyzes a trans-dehydration via an enolate intermediate. This chain is 3-dehydroquinate dehydratase, found in Acidovorax ebreus (strain TPSY) (Diaphorobacter sp. (strain TPSY)).